The primary structure comprises 238 residues: Uridylate kinase (238 aa).

12–15 serves as a coordination point for ATP; that stretch reads KLSG. Glycine 54 serves as a coordination point for UMP. ATP contacts are provided by glycine 55 and arginine 59. UMP contacts are provided by residues aspartate 74 and 135-142; that span reads VGAPYFTT. Residues threonine 162, tyrosine 168, and aspartate 171 each coordinate ATP.

The protein belongs to the UMP kinase family. Homohexamer.

The protein localises to the cytoplasm. The catalysed reaction is UMP + ATP = UDP + ADP. Its pathway is pyrimidine metabolism; CTP biosynthesis via de novo pathway; UDP from UMP (UMPK route): step 1/1. With respect to regulation, inhibited by UTP. In terms of biological role, catalyzes the reversible phosphorylation of UMP to UDP. The protein is Uridylate kinase of Erythrobacter litoralis (strain HTCC2594).